Here is a 551-residue protein sequence, read N- to C-terminus: TRAF3-interacting JNK-activating modulator (551 aa).

At 1-526 (MISPDPRPSP…QLPPRRQCGR (526 aa)) the chain is on the cytoplasmic side. Disordered stretches follow at residues 73–95 (LEEK…RPGQ) and 140–178 (DHLS…IKND). Coiled-coil stretches lie at residues 240–436 (DKLK…LLTK) and 464–506 (WDLR…RKLQ). Residues 527–544 (WLPVLMVVIAAALAVFLA) form a helical; Anchor for type IV membrane protein membrane-spanning segment. Residues 545–551 (NKDNLMI) lie on the Extracellular side of the membrane.

Interacts (via its coiled-coil domain) with TRAF3 (via isoleucine zipper). Interacts with MAP2K1. Interacts with PPP2CA; this interaction targets PPP2CA to the lysosomes. Interacts with TLR4. Interacts with MAVS. Interacts with TBK1.

It is found in the cell membrane. The protein resides in the golgi apparatus membrane. Its subcellular location is the lysosome membrane. The protein localises to the mitochondrion outer membrane. Its function is as follows. Adapter protein that plays essential roles in both innate and adaptive immunity. Plays a crucial role in the regulation of thymocyte development. Mechanistically, mediates TCR-stimulated activation through recruiting MAP2K1/MEK1 to the Golgi and, thereby, facilitating the interaction of MAP2K1/MEK1 with its activator BRAF. Also plays an essential role in regulatory T-cell stability and function by recruiting the serine-threonine phosphatase catalytic subunit (PPP2CA) to the lysosome, thereby facilitating the interaction of PP2Ac with the mTORC1 component RPTOR and restricting glycolytic metabolism. Positively regulates TLR4 signaling activity in macrophage-mediated inflammation by acting as a molecular clamp to facilitate LPS-induced translocation of TLR4 to lipid rafts. In response to viral infection, facilitates the recruitment of TRAF3 to MAVS within mitochondria leading to IRF3 activation and interferon production. However, participates in the maintenance of immune homeostasis and the prevention of overzealous innate immunity by promoting 'Lys-48'-dependent ubiquitination of TBK1. The polypeptide is TRAF3-interacting JNK-activating modulator (TRAF3IP3) (Homo sapiens (Human)).